The primary structure comprises 244 residues: Transcriptional activator protein Anr (244 aa).

Position 21 to 149 (21 to 149 (APLCLPLSLN…RVMSREIRDD (129 aa))) interacts with a nucleoside 3',5'-cyclic phosphate. The HTH crp-type domain occupies 159-232 (KTADERIATF…GKEVHILDPI (74 aa)). A DNA-binding region (H-T-H motif) is located at residues 192–211 (RNEIGNYLGLAVETVSRVFT).

Its function is as follows. Transcriptional activator of anaerobic gene expression. Regulates the expression of the components of the hydrogen cyanide synthase (HcnABC) in a positive manner. May also act as an iron sensor. This Pseudomonas protegens (strain DSM 19095 / LMG 27888 / CFBP 6595 / CHA0) protein is Transcriptional activator protein Anr.